The primary structure comprises 114 residues: uncharacterized protein (114 aa).

The segment at 1-114 is disordered; the sequence is MSTAASSRMR…HASQSPDTAY (114 aa). The segment covering 32–43 has biased composition (low complexity); that stretch reads CRRVPSRPCRPV.

This is an uncharacterized protein from Human adenovirus B serotype 7 (HAdV-7).